Reading from the N-terminus, the 475-residue chain is Ankyrin repeat, SAM and basic leucine zipper domain-containing protein 1 (475 aa).

Residues Ser17, Ser18, and Ser20 each carry the phosphoserine modification. ANK repeat units follow at residues Glu45–Thr74, Tyr78–Phe107, Asp110–Met144, Arg148–Ala177, Asn181–Ile210, and Asp214–Gly243. In terms of domain architecture, SAM spans Ser272–Glu334.

Interacts with DDX4, PIWIL1, RANBP9 and TDRD1.

Its subcellular location is the cytoplasm. Functionally, plays a central role during spermatogenesis by repressing transposable elements and preventing their mobilization, which is essential for the germline integrity. Acts via the piRNA metabolic process, which mediates the repression of transposable elements during meiosis by forming complexes composed of piRNAs and Piwi proteins and governs the methylation and subsequent repression of transposons. Its association with pi-bodies suggests a participation in the primary piRNAs metabolic process. Required prior to the pachytene stage to facilitate the production of multiple types of piRNAs, including those associated with repeats involved in the regulation of retrotransposons. May act by mediating protein-protein interactions during germ cell maturation. The protein is Ankyrin repeat, SAM and basic leucine zipper domain-containing protein 1 (ASZ1) of Atelerix albiventris (Middle-African hedgehog).